The following is a 606-amino-acid chain: Leucine-rich repeat and immunoglobulin-like domain-containing nogo receptor-interacting protein 2 (606 aa).

A signal peptide spans 1-27 (MLHTAISCWQPFLGLAVVLIFMGSTIG). Residues 28–57 (CPARCECSAQNKSVSCHRRRLIAIPEGIPI) form the LRRNT domain. Over 28 to 545 (CPARCECSAQ…LDLKTILVST (518 aa)) the chain is Extracellular. Asn38 carries N-linked (GlcNAc...) asparagine glycosylation. 12 LRR repeats span residues 58-79 (ETKILDLSKNRLKSVNPEEFIS), 82-103 (LLEEIDLSDNIIANVEPGAFNN), 106-127 (NLRSLRLKGNRLKLVPLGVFTG), 130-151 (NLTKLDISENKIVILLDYMFQD), 154-175 (NLKSLEVGDNDLVYISHRAFSG), 178-199 (SLEQLTLEKCNLTAVPTEALSH), 202-223 (SLISLHLKHLNINNMPVYAFKR), 226-247 (HLKHLEIDYWPLLDMMPANSLY), 250-271 (NLTSLSVTNTNLSTVPFLAFKH), 274-295 (YLTHLNLSYNPISTIEAGMFSD), 298-319 (RLQELHIVGAQLRTIEPHSFQG), and 322-343 (FLRVLNVSQNLLETLEENVFSS). Residue Asn130 is glycosylated (N-linked (GlcNAc...) asparagine). Asn188 is a glycosylation site (N-linked (GlcNAc...) asparagine). Residue Asn279 is glycosylated (N-linked (GlcNAc...) asparagine). An N-linked (GlcNAc...) asparagine glycan is attached at Asn327. An LRRCT domain is found at 355–409 (NPLACDCRLLWILQRQPTLQFGGQQPMCAGPDTIRERSFKDFHSTALSFYFTCKK). One can recognise an Ig-like C2-type domain in the interval 410-499 (PKIREKKLQH…GNDTFTASLT (90 aa)). Cysteines 432 and 483 form a disulfide. The chain crosses the membrane as a helical span at residues 546–566 (AMGCFTFLGVVLFCFLLLFVW). The Cytoplasmic portion of the chain corresponds to 567-606 (SRGKGKHKNSIDLEYVPRKNNGAVVEGEVAGPRRFNMKMI).

The protein resides in the membrane. The polypeptide is Leucine-rich repeat and immunoglobulin-like domain-containing nogo receptor-interacting protein 2 (LINGO2) (Homo sapiens (Human)).